Consider the following 238-residue polypeptide: 1-(5-phosphoribosyl)-5-[(5-phosphoribosylamino)methylideneamino] imidazole-4-carboxamide isomerase (238 aa).

Residue D8 is the Proton acceptor of the active site. D129 serves as the catalytic Proton donor.

It belongs to the HisA/HisF family.

The protein resides in the cytoplasm. The catalysed reaction is 1-(5-phospho-beta-D-ribosyl)-5-[(5-phospho-beta-D-ribosylamino)methylideneamino]imidazole-4-carboxamide = 5-[(5-phospho-1-deoxy-D-ribulos-1-ylimino)methylamino]-1-(5-phospho-beta-D-ribosyl)imidazole-4-carboxamide. It functions in the pathway amino-acid biosynthesis; L-histidine biosynthesis; L-histidine from 5-phospho-alpha-D-ribose 1-diphosphate: step 4/9. The polypeptide is 1-(5-phosphoribosyl)-5-[(5-phosphoribosylamino)methylideneamino] imidazole-4-carboxamide isomerase (Lacticaseibacillus casei (strain BL23) (Lactobacillus casei)).